The following is a 187-amino-acid chain: Peptidyl-tRNA hydrolase (187 aa).

Y14 is a tRNA binding site. The active-site Proton acceptor is H19. Residues F60 and N62 each coordinate tRNA.

The protein belongs to the PTH family. In terms of assembly, monomer.

The protein localises to the cytoplasm. It catalyses the reaction an N-acyl-L-alpha-aminoacyl-tRNA + H2O = an N-acyl-L-amino acid + a tRNA + H(+). In terms of biological role, hydrolyzes ribosome-free peptidyl-tRNAs (with 1 or more amino acids incorporated), which drop off the ribosome during protein synthesis, or as a result of ribosome stalling. Its function is as follows. Catalyzes the release of premature peptidyl moieties from peptidyl-tRNA molecules trapped in stalled 50S ribosomal subunits, and thus maintains levels of free tRNAs and 50S ribosomes. This Pseudothermotoga lettingae (strain ATCC BAA-301 / DSM 14385 / NBRC 107922 / TMO) (Thermotoga lettingae) protein is Peptidyl-tRNA hydrolase.